Reading from the N-terminus, the 223-residue chain is MRVAGLIRVVVFIFTIVTMWVFLRSYTSFSRKTIRLPRWLGITPKDIQTPKSKCGLSKICPNNFFAFKISSGAANVVGPSMCFEDEIIMSPVRNNVGRGLNVALVNGSTGQVMKKDSFDMYSGDPQLLLNFLTEIPDSTLVLVASYDDPGTKMNDKIKTLFSNLGSSYAKQLGFRDSWVFVGAKDLKSKSPYEQFLKNNPETNKYDGWPELLELEGCVPRKVM.

The signal sequence occupies residues 1 to 25 (MRVAGLIRVVVFIFTIVTMWVFLRS). Disulfide bonds link Cys54–Cys82 and Cys60–Cys217. The 160-residue stretch at 62–221 (NNFFAFKISS…LELEGCVPRK (160 aa)) folds into the GG-type lectin domain. An N-linked (GlcNAc...) asparagine glycan is attached at Asn106.

This sequence belongs to the FAM3 family.

Its subcellular location is the secreted. The polypeptide is Protein FAM3D (Mus musculus (Mouse)).